The primary structure comprises 376 residues: Dual-specificity RNA methyltransferase RlmN (376 aa).

Glu96 serves as the catalytic Proton acceptor. One can recognise a Radical SAM core domain in the interval 102–341 (DEDRATLCVS…VVVRKTRGDD (240 aa)). A disulfide bridge links Cys109 with Cys346. Cys116, Cys120, and Cys123 together coordinate [4Fe-4S] cluster. S-adenosyl-L-methionine contacts are provided by residues 170 to 171 (GE), Ser202, 224 to 226 (SLH), and Asn303. Cys346 acts as the S-methylcysteine intermediate in catalysis.

It belongs to the radical SAM superfamily. RlmN family. The cofactor is [4Fe-4S] cluster.

It localises to the cytoplasm. The catalysed reaction is adenosine(2503) in 23S rRNA + 2 reduced [2Fe-2S]-[ferredoxin] + 2 S-adenosyl-L-methionine = 2-methyladenosine(2503) in 23S rRNA + 5'-deoxyadenosine + L-methionine + 2 oxidized [2Fe-2S]-[ferredoxin] + S-adenosyl-L-homocysteine. It catalyses the reaction adenosine(37) in tRNA + 2 reduced [2Fe-2S]-[ferredoxin] + 2 S-adenosyl-L-methionine = 2-methyladenosine(37) in tRNA + 5'-deoxyadenosine + L-methionine + 2 oxidized [2Fe-2S]-[ferredoxin] + S-adenosyl-L-homocysteine. Specifically methylates position 2 of adenine 2503 in 23S rRNA and position 2 of adenine 37 in tRNAs. m2A2503 modification seems to play a crucial role in the proofreading step occurring at the peptidyl transferase center and thus would serve to optimize ribosomal fidelity. The chain is Dual-specificity RNA methyltransferase RlmN from Pseudoalteromonas atlantica (strain T6c / ATCC BAA-1087).